A 375-amino-acid chain; its full sequence is N-acetylneuraminate epimerase (375 aa).

A signal peptide spans 1 to 22 (MKLTKTALCTALFATFTFSANA). Kelch repeat units follow at residues 43-87 (TVYV…AAVD), 89-140 (KLYV…ASHG), 142-176 (KVYILGGSNLSIFNGFFQDNVAAGEDQAKKDEIAA), 177-222 (AYFD…TIQG), 225-273 (LVVV…LAGA), 295-344 (KQYK…SYNN), and 346-375 (VLLIGGETDGGKALTSVKAISYDGKKLTIE). The active-site Proton acceptor is Glu-231.

This sequence belongs to the NanM family. Homodimer.

The protein resides in the periplasm. The catalysed reaction is N-acetyl-alpha-neuraminate = N-acetyl-beta-neuraminate. Functionally, converts alpha-N-acetylneuranimic acid (Neu5Ac) to the beta-anomer, accelerating the equilibrium between the alpha- and beta-anomers. Probably facilitates sialidase-negative bacteria to compete successfully for limited amounts of extracellular Neu5Ac, which is likely taken up in the beta-anomer. In addition, the rapid removal of sialic acid from solution might be advantageous to the bacterium to damp down host responses. This chain is N-acetylneuraminate epimerase, found in Haemophilus influenzae (strain PittEE).